The primary structure comprises 1436 residues: Gag-Pol polyprotein (1436 aa).

Glycine 2 carries N-myristoyl glycine; by host lipidation. The interaction with Gp41 stretch occupies residues 7–31; that stretch reads VLSGGKLDKWEKIRLRPRGKKRYKL. The tract at residues 8-43 is interaction with host CALM1; sequence LSGGKLDKWEKIRLRPRGKKRYKLKHIVWASRELER. The segment at 12–19 is interaction with host AP3D1; it reads KLDKWEKI. An interaction with membrane phosphatidylinositol 4,5-bisphosphate and RNA region spans residues 14–33; it reads DKWEKIRLRPRGKKRYKLKH. The Nuclear export signal signature appears at 16 to 22; sequence WEKIRLR. The short motif at 26–32 is the Nuclear localization signal element; the sequence is KKRYKLK. Residues 73–77 form an interaction with membrane phosphatidylinositol 4,5-bisphosphate region; that stretch reads EELKS. The segment at 106 to 128 is disordered; the sequence is EEQNKSKKKAQQAAADTGNGSQV. At tyrosine 132 the chain carries Phosphotyrosine; by host. The tract at residues 189 to 227 is interaction with human PPIA/CYPA and NUP153; the sequence is NTVGGHQAAMQMLKETINEEAAEWDRLHPVHAGPIAPGQ. The interval 277-363 is dimerization/Multimerization of capsid protein p24; sequence YSPISILDIR…GGPSHKARIL (87 aa). CCHC-type zinc fingers lie at residues 390 to 407 and 411 to 428; these read VKCFNCGKVGHIAKNCRA and KGCWKCGKEGHQMKDCTN. Residues 446-465 are disordered; sequence KARELSSEQTRANSPTRREL. The segment at 490–494 is dimerization of protease; the sequence is PQITL. In terms of domain architecture, Peptidase A2 spans 509-578; that stretch reads KEALLDTGAD…TPVNIIGRNL (70 aa). Aspartate 514 serves as the catalytic For protease activity; shared with dimeric partner. 2 dimerization of protease regions span residues 538–544 and 577–589; these read GIGGFIK and NLLTQIGCTLNFP. The 191-residue stretch at 632–822 folds into the Reverse transcriptase domain; that stretch reads EGKISKIGPE…PPFLWMGYEL (191 aa). Positions 698, 773, and 774 each coordinate Mg(2+). The interval 815–823 is RT 'primer grip'; that stretch reads FLWMGYELH. The Tryptophan repeat motif motif lies at 986–1002; sequence WEAWWTEYWQATWIPEW. The RNase H type-1 domain maps to 1022–1145; it reads IIGAETFYVD…VDRLVSTGIR (124 aa). Residues aspartate 1031, glutamate 1066, aspartate 1086, and aspartate 1137 each contribute to the Mg(2+) site. An Integrase-type zinc finger spans residues 1151-1192; the sequence is DGIDKAQDEHEKYHSNWRAMASDFNLPPVVAKEIVASCDKCQ. Positions 1160, 1164, 1188, and 1191 each coordinate Zn(2+). Positions 1202–1352 constitute an Integrase catalytic domain; it reads VDCSPGIWQL…SAGERIVDII (151 aa). Aspartate 1212, aspartate 1264, and glutamate 1300 together coordinate Mg(2+). The segment at residues 1371-1418 is a DNA-binding region (integrase-type); sequence FRVYYRDSRDPLWKGHAKLLWKGEGAVVIQDNSDIKVVPRRKAKIIRD.

In terms of assembly, homotrimer; further assembles as hexamers of trimers. Interacts with gp41 (via C-terminus). Interacts with host CALM1; this interaction induces a conformational change in the Matrix protein, triggering exposure of the myristate group. Interacts with host AP3D1; this interaction allows the polyprotein trafficking to multivesicular bodies during virus assembly. Part of the pre-integration complex (PIC) which is composed of viral genome, matrix protein, Vpr and integrase. Homodimer; the homodimer further multimerizes as homohexamers or homopentamers. Interacts with human PPIA/CYPA; This interaction stabilizes the capsid. Interacts with human NUP153. Interacts with host PDZD8; this interaction stabilizes the capsid. Interacts with monkey TRIM5; this interaction destabilizes the capsid. As to quaternary structure, homodimer, whose active site consists of two apposed aspartic acid residues. In terms of assembly, heterodimer of p66 RT and p51 RT (RT p66/p51). Heterodimerization of RT is essential for DNA polymerase activity. The overall folding of the subdomains is similar in p66 RT and p51 RT but the spatial arrangements of the subdomains are dramatically different. Homotetramer; may further associate as a homohexadecamer. Part of the pre-integration complex (PIC) which is composed of viral genome, matrix protein, Vpr and integrase. Interacts with human SMARCB1/INI1 and human PSIP1/LEDGF isoform 1. Interacts with human KPNA3; this interaction might play a role in nuclear import of the pre-integration complex. Interacts with human NUP153; this interaction might play a role in nuclear import of the pre-integration complex. It depends on Mg(2+) as a cofactor. In terms of processing, specific enzymatic cleavages by the viral protease yield mature proteins. The protease is released by autocatalytic cleavage. The polyprotein is cleaved during and after budding, this process is termed maturation. Proteolytic cleavage of p66 RT removes the RNase H domain to yield the p51 RT subunit. Nucleocapsid protein p7 might be further cleaved after virus entry. Post-translationally, tyrosine phosphorylated presumably in the virion by a host kinase. Phosphorylation is apparently not a major regulator of membrane association. Phosphorylated possibly by host MAPK1; this phosphorylation is necessary for Pin1-mediated virion uncoating. In terms of processing, methylated by host PRMT6, impairing its function by reducing RNA annealing and the initiation of reverse transcription.

The protein resides in the host cell membrane. It localises to the host endosome. The protein localises to the host multivesicular body. It is found in the virion membrane. Its subcellular location is the host nucleus. The protein resides in the host cytoplasm. It localises to the virion. It carries out the reaction Specific for a P1 residue that is hydrophobic, and P1' variable, but often Pro.. The enzyme catalyses Endohydrolysis of RNA in RNA/DNA hybrids. Three different cleavage modes: 1. sequence-specific internal cleavage of RNA. Human immunodeficiency virus type 1 and Moloney murine leukemia virus enzymes prefer to cleave the RNA strand one nucleotide away from the RNA-DNA junction. 2. RNA 5'-end directed cleavage 13-19 nucleotides from the RNA end. 3. DNA 3'-end directed cleavage 15-20 nucleotides away from the primer terminus.. It catalyses the reaction 3'-end directed exonucleolytic cleavage of viral RNA-DNA hybrid.. The catalysed reaction is DNA(n) + a 2'-deoxyribonucleoside 5'-triphosphate = DNA(n+1) + diphosphate. Its activity is regulated as follows. Protease: The viral protease is inhibited by many synthetic protease inhibitors (PIs), such as amprenavir, atazanavir, indinavir, loprinavir, nelfinavir, ritonavir and saquinavir. Use of protease inhibitors in tritherapy regimens permit more ambitious therapeutic strategies. Reverse transcriptase/ribonuclease H: RT can be inhibited either by nucleoside RT inhibitors (NRTIs) or by non nucleoside RT inhibitors (NNRTIs). NRTIs act as chain terminators, whereas NNRTIs inhibit DNA polymerization by binding a small hydrophobic pocket near the RT active site and inducing an allosteric change in this region. Classical NRTIs are abacavir, adefovir (PMEA), didanosine (ddI), lamivudine (3TC), stavudine (d4T), tenofovir (PMPA), zalcitabine (ddC), and zidovudine (AZT). Classical NNRTIs are atevirdine (BHAP U-87201E), delavirdine, efavirenz (DMP-266), emivirine (I-EBU), and nevirapine (BI-RG-587). The tritherapies used as a basic effective treatment of AIDS associate two NRTIs and one NNRTI. Mediates, with Gag polyprotein, the essential events in virion assembly, including binding the plasma membrane, making the protein-protein interactions necessary to create spherical particles, recruiting the viral Env proteins, and packaging the genomic RNA via direct interactions with the RNA packaging sequence (Psi). Gag-Pol polyprotein may regulate its own translation, by the binding genomic RNA in the 5'-UTR. At low concentration, the polyprotein would promote translation, whereas at high concentration, the polyprotein would encapsidate genomic RNA and then shut off translation. In terms of biological role, targets the polyprotein to the plasma membrane via a multipartite membrane-binding signal, that includes its myristoylated N-terminus. Matrix protein is part of the pre-integration complex. Implicated in the release from host cell mediated by Vpu. Binds to RNA. Its function is as follows. Forms the conical core that encapsulates the genomic RNA-nucleocapsid complex in the virion. Most core are conical, with only 7% tubular. The core is constituted by capsid protein hexamer subunits. The core is disassembled soon after virion entry. Host restriction factors such as TRIM5-alpha or TRIMCyp bind retroviral capsids and cause premature capsid disassembly, leading to blocks in reverse transcription. Capsid restriction by TRIM5 is one of the factors which restricts HIV-1 to the human species. Host PIN1 apparently facilitates the virion uncoating. On the other hand, interactions with PDZD8 or CYPA stabilize the capsid. Functionally, encapsulates and protects viral dimeric unspliced genomic RNA (gRNA). Binds these RNAs through its zinc fingers. Acts as a nucleic acid chaperone which is involved in rearangement of nucleic acid secondary structure during gRNA retrotranscription. Also facilitates template switch leading to recombination. As part of the polyprotein, participates in gRNA dimerization, packaging, tRNA incorporation and virion assembly. Aspartyl protease that mediates proteolytic cleavages of Gag and Gag-Pol polyproteins during or shortly after the release of the virion from the plasma membrane. Cleavages take place as an ordered, step-wise cascade to yield mature proteins. This process is called maturation. Displays maximal activity during the budding process just prior to particle release from the cell. Also cleaves Nef and Vif, probably concomitantly with viral structural proteins on maturation of virus particles. Hydrolyzes host EIF4GI and PABP1 in order to shut off the capped cellular mRNA translation. The resulting inhibition of cellular protein synthesis serves to ensure maximal viral gene expression and to evade host immune response. Also mediates cleavage of host YTHDF3. Mediates cleavage of host CARD8, thereby activating the CARD8 inflammasome, leading to the clearance of latent HIV-1 in patient CD4(+) T-cells after viral reactivation; in contrast, HIV-1 can evade CARD8-sensing when its protease remains inactive in infected cells prior to viral budding. In terms of biological role, multifunctional enzyme that converts the viral RNA genome into dsDNA in the cytoplasm, shortly after virus entry into the cell. This enzyme displays a DNA polymerase activity that can copy either DNA or RNA templates, and a ribonuclease H (RNase H) activity that cleaves the RNA strand of RNA-DNA heteroduplexes in a partially processive 3' to 5' endonucleasic mode. Conversion of viral genomic RNA into dsDNA requires many steps. A tRNA(3)-Lys binds to the primer-binding site (PBS) situated at the 5'-end of the viral RNA. RT uses the 3' end of the tRNA primer to perform a short round of RNA-dependent minus-strand DNA synthesis. The reading proceeds through the U5 region and ends after the repeated (R) region which is present at both ends of viral RNA. The portion of the RNA-DNA heteroduplex is digested by the RNase H, resulting in a ssDNA product attached to the tRNA primer. This ssDNA/tRNA hybridizes with the identical R region situated at the 3' end of viral RNA. This template exchange, known as minus-strand DNA strong stop transfer, can be either intra- or intermolecular. RT uses the 3' end of this newly synthesized short ssDNA to perform the RNA-dependent minus-strand DNA synthesis of the whole template. RNase H digests the RNA template except for two polypurine tracts (PPTs) situated at the 5'-end and near the center of the genome. It is not clear if both polymerase and RNase H activities are simultaneous. RNase H probably can proceed both in a polymerase-dependent (RNA cut into small fragments by the same RT performing DNA synthesis) and a polymerase-independent mode (cleavage of remaining RNA fragments by free RTs). Secondly, RT performs DNA-directed plus-strand DNA synthesis using the PPTs that have not been removed by RNase H as primers. PPTs and tRNA primers are then removed by RNase H. The 3' and 5' ssDNA PBS regions hybridize to form a circular dsDNA intermediate. Strand displacement synthesis by RT to the PBS and PPT ends produces a blunt ended, linear dsDNA copy of the viral genome that includes long terminal repeats (LTRs) at both ends. Its function is as follows. Catalyzes viral DNA integration into the host chromosome, by performing a series of DNA cutting and joining reactions. This enzyme activity takes place after virion entry into a cell and reverse transcription of the RNA genome in dsDNA. The first step in the integration process is 3' processing. This step requires a complex comprising the viral genome, matrix protein, Vpr and integrase. This complex is called the pre-integration complex (PIC). The integrase protein removes 2 nucleotides from each 3' end of the viral DNA, leaving recessed CA OH's at the 3' ends. In the second step, the PIC enters cell nucleus. This process is mediated through integrase and Vpr proteins, and allows the virus to infect a non dividing cell. This ability to enter the nucleus is specific of lentiviruses, other retroviruses cannot and rely on cell division to access cell chromosomes. In the third step, termed strand transfer, the integrase protein joins the previously processed 3' ends to the 5' ends of strands of target cellular DNA at the site of integration. The 5'-ends are produced by integrase-catalyzed staggered cuts, 5 bp apart. A Y-shaped, gapped, recombination intermediate results, with the 5'-ends of the viral DNA strands and the 3' ends of target DNA strands remaining unjoined, flanking a gap of 5 bp. The last step is viral DNA integration into host chromosome. This involves host DNA repair synthesis in which the 5 bp gaps between the unjoined strands are filled in and then ligated. Since this process occurs at both cuts flanking the HIV genome, a 5 bp duplication of host DNA is produced at the ends of HIV-1 integration. Alternatively, Integrase may catalyze the excision of viral DNA just after strand transfer, this is termed disintegration. In Human immunodeficiency virus type 1 group M subtype B (isolate RF/HAT3) (HIV-1), this protein is Gag-Pol polyprotein (gag-pol).